A 267-amino-acid chain; its full sequence is Fibroin light chain (267 aa).

A signal peptide spans 1–16; sequence MLPFVLVLLVATSALA. An N-acetylserine; in short form modification is found at serine 19. A disulfide bond links cysteine 103 and cysteine 162.

In terms of assembly, silk fibroin elementary unit consists in a disulfide-linked heavy and light chain and a p25 glycoprotein in molar ratios of 6:6:1. This results in a complex of approximately 2.3 MDa. Post-translationally, partially N-terminally processed to yield a short form which lacks the first two residues of the long form. In terms of processing, the interchain disulfide bridge is essential for the intracellular transport and secretion of fibroin. Produced exclusively in the posterior (PSG) section of silk glands, which are essentially modified salivary glands.

Its subcellular location is the secreted. It is likely that the major role of L-chain is to prevent the retention of H-chain in ER by forming the disulfide linkage. In Galleria mellonella (Greater wax moth), this protein is Fibroin light chain (FIBL).